The primary structure comprises 71 residues: ATP synthase F(0) complex subunit e, mitochondrial (71 aa).

Lysine 34 is modified (N6-acetyllysine). Serine 68 carries the post-translational modification Phosphoserine.

It belongs to the ATPase e subunit family. In terms of assembly, component of the ATP synthase complex composed at least of ATP5F1A/subunit alpha, ATP5F1B/subunit beta, ATP5MC1/subunit c (homooctomer), MT-ATP6/subunit a, MT-ATP8/subunit 8, ATP5ME/subunit e, ATP5MF/subunit f, ATP5MG/subunit g, ATP5MK/subunit k, ATP5MJ/subunit j, ATP5F1C/subunit gamma, ATP5F1D/subunit delta, ATP5F1E/subunit epsilon, ATP5PF/subunit F6, ATP5PB/subunit b, ATP5PD/subunit d, ATP5PO/subunit OSCP. ATP synthase complex consists of a soluble F(1) head domain (subunits alpha(3) and beta(3)) - the catalytic core - and a membrane F(0) domain - the membrane proton channel (subunits c, a, 8, e, f, g, k and j). These two domains are linked by a central stalk (subunits gamma, delta, and epsilon) rotating inside the F1 region and a stationary peripheral stalk (subunits F6, b, d, and OSCP).

The protein resides in the mitochondrion. It is found in the mitochondrion inner membrane. Subunit e, of the mitochondrial membrane ATP synthase complex (F(1)F(0) ATP synthase or Complex V) that produces ATP from ADP in the presence of a proton gradient across the membrane which is generated by electron transport complexes of the respiratory chain. ATP synthase complex consist of a soluble F(1) head domain - the catalytic core - and a membrane F(1) domain - the membrane proton channel. These two domains are linked by a central stalk rotating inside the F(1) region and a stationary peripheral stalk. During catalysis, ATP synthesis in the catalytic domain of F(1) is coupled via a rotary mechanism of the central stalk subunits to proton translocation. In vivo, can only synthesize ATP although its ATP hydrolase activity can be activated artificially in vitro. Part of the complex F(0) domain. The polypeptide is ATP synthase F(0) complex subunit e, mitochondrial (Rattus norvegicus (Rat)).